A 96-amino-acid polypeptide reads, in one-letter code: Co-chaperonin GroES (96 aa).

The protein belongs to the GroES chaperonin family. As to quaternary structure, heptamer of 7 subunits arranged in a ring. Interacts with the chaperonin GroEL.

It localises to the cytoplasm. Functionally, together with the chaperonin GroEL, plays an essential role in assisting protein folding. The GroEL-GroES system forms a nano-cage that allows encapsulation of the non-native substrate proteins and provides a physical environment optimized to promote and accelerate protein folding. GroES binds to the apical surface of the GroEL ring, thereby capping the opening of the GroEL channel. This is Co-chaperonin GroES from Holospora obtusa.